The following is a 346-amino-acid chain: Very-long-chain 3-oxoacyl-CoA reductase (346 aa).

Residues 19-39 form a helical membrane-spanning segment; the sequence is VLLGALLVGVFKLTVFILSVT. NADP(+)-binding residues include valine 65, aspartate 119, asparagine 146, tyrosine 220, lysine 224, valine 253, and serine 255. Catalysis depends on tyrosine 220, which acts as the Proton donor. The active-site Lowers pKa of active site Tyr is the lysine 224.

This sequence belongs to the short-chain dehydrogenases/reductases (SDR) family.

Its subcellular location is the endoplasmic reticulum membrane. The enzyme catalyses a very-long-chain (3R)-3-hydroxyacyl-CoA + NADP(+) = a very-long-chain 3-oxoacyl-CoA + NADPH + H(+). It participates in lipid metabolism; fatty acid biosynthesis. Component of the microsomal membrane bound fatty acid elongation system, which produces the 26-carbon very long-chain fatty acids (VLCFA) from palmitate. Catalyzes the reduction of the 3-ketoacyl-CoA intermediate that is formed in each cycle of fatty acid elongation. VLCFAs serve as precursors for ceramide and sphingolipids. In Scheffersomyces stipitis (strain ATCC 58785 / CBS 6054 / NBRC 10063 / NRRL Y-11545) (Yeast), this protein is Very-long-chain 3-oxoacyl-CoA reductase.